Reading from the N-terminus, the 156-residue chain is Protein-export protein SecB (156 aa).

Belongs to the SecB family. In terms of assembly, homotetramer, a dimer of dimers. One homotetramer interacts with 1 SecA dimer.

The protein resides in the cytoplasm. One of the proteins required for the normal export of preproteins out of the cell cytoplasm. It is a molecular chaperone that binds to a subset of precursor proteins, maintaining them in a translocation-competent state. It also specifically binds to its receptor SecA. This chain is Protein-export protein SecB, found in Aeromonas hydrophila subsp. hydrophila (strain ATCC 7966 / DSM 30187 / BCRC 13018 / CCUG 14551 / JCM 1027 / KCTC 2358 / NCIMB 9240 / NCTC 8049).